A 432-amino-acid chain; its full sequence is Adenylosuccinate synthetase 2 (432 aa).

Residues 12–18 (GDEGKGR) and 40–42 (GHT) each bind GTP. Residue D13 is the Proton acceptor of the active site. The Mg(2+) site is built by D13 and G40. Residues 13–16 (DEGK), 38–41 (NAGH), T128, R142, Q222, T237, and R301 each bind IMP. Residue H41 is the Proton donor of the active site. 297-303 (VNTGRPR) provides a ligand contact to substrate. GTP is bound by residues R303, 329 to 331 (KLD), and 411 to 413 (TTG).

This sequence belongs to the adenylosuccinate synthetase family. In terms of assembly, homodimer. Requires Mg(2+) as cofactor.

The protein localises to the cytoplasm. The catalysed reaction is IMP + L-aspartate + GTP = N(6)-(1,2-dicarboxyethyl)-AMP + GDP + phosphate + 2 H(+). It functions in the pathway purine metabolism; AMP biosynthesis via de novo pathway; AMP from IMP: step 1/2. Functionally, plays an important role in the de novo pathway of purine nucleotide biosynthesis. Catalyzes the first committed step in the biosynthesis of AMP from IMP. The protein is Adenylosuccinate synthetase 2 of Burkholderia lata (strain ATCC 17760 / DSM 23089 / LMG 22485 / NCIMB 9086 / R18194 / 383).